Reading from the N-terminus, the 111-residue chain is Ribosome-binding factor A (111 aa).

This sequence belongs to the RbfA family. As to quaternary structure, monomer. Binds 30S ribosomal subunits, but not 50S ribosomal subunits or 70S ribosomes.

It is found in the cytoplasm. One of several proteins that assist in the late maturation steps of the functional core of the 30S ribosomal subunit. Associates with free 30S ribosomal subunits (but not with 30S subunits that are part of 70S ribosomes or polysomes). Required for efficient processing of 16S rRNA. May interact with the 5'-terminal helix region of 16S rRNA. This chain is Ribosome-binding factor A, found in Helicobacter pylori (strain G27).